Consider the following 555-residue polypeptide: Energy-dependent translational throttle protein EttA (555 aa).

ABC transporter domains lie at 6-259 (YTMH…AQEA) and 324-550 (LEVS…RIKY). Residue 39–46 (GLNGAGKS) participates in ATP binding. The tract at residues 95-139 (SEVVNALKRLDEVYALYADPDADFDKLAAEQGRLEEIIQAHDGHN) is arm. The ptIM stretch occupies residues 242–322 (GNYSSWLEQK…IPPGPRLGDK (81 aa)). Residue 356–363 (GPNGAGKS) coordinates ATP.

Belongs to the ABC transporter superfamily. ABCF family. Translational throttle EttA subfamily. In terms of assembly, monomer. Probably contacts ribosomal proteins L1, L5, L33 and S7, the 16S and 23S rRNA and the P-site containing tRNA(fMet).

The protein localises to the cytoplasm. The catalysed reaction is ATP + H2O = ADP + phosphate + H(+). Its function is as follows. A translation factor that gates the progression of the 70S ribosomal initiation complex (IC, containing tRNA(fMet) in the P-site) into the translation elongation cycle by using a mechanism sensitive to the ATP/ADP ratio. Binds to the 70S ribosome E-site where it modulates the state of the translating ribosome during subunit translocation. ATP hydrolysis probably frees it from the ribosome, which can enter the elongation phase. The protein is Energy-dependent translational throttle protein EttA of Escherichia coli O6:H1 (strain CFT073 / ATCC 700928 / UPEC).